A 349-amino-acid chain; its full sequence is Ion-translocating oxidoreductase complex subunit D (349 aa).

Transmembrane regions (helical) follow at residues 20–42, 77–99, and 124–144; these read VMQR…FGWG, SAML…WMIV, and AMAA…TWIA. T185 carries the post-translational modification FMN phosphoryl threonine. A run of 5 helical transmembrane segments spans residues 212–232, 239–259, 265–285, 291–311, and 315–335; these read STGV…LVLL, WHIS…GFLL, ASPL…FIAT, ATSP…VYII, and GGYP…APFI.

It belongs to the NqrB/RnfD family. The complex is composed of six subunits: RnfA, RnfB, RnfC, RnfD, RnfE and RnfG. The cofactor is FMN.

The protein localises to the cell inner membrane. Part of a membrane-bound complex that couples electron transfer with translocation of ions across the membrane. This chain is Ion-translocating oxidoreductase complex subunit D, found in Shewanella baltica (strain OS185).